Consider the following 507-residue polypeptide: ATP synthase subunit alpha (507 aa).

ATP is bound at residue 170-177 (GDRQTGKT).

This sequence belongs to the ATPase alpha/beta chains family. As to quaternary structure, F-type ATPases have 2 components, CF(1) - the catalytic core - and CF(0) - the membrane proton channel. CF(1) has five subunits: alpha(3), beta(3), gamma(1), delta(1), epsilon(1). CF(0) has three main subunits: a(1), b(2) and c(9-12). The alpha and beta chains form an alternating ring which encloses part of the gamma chain. CF(1) is attached to CF(0) by a central stalk formed by the gamma and epsilon chains, while a peripheral stalk is formed by the delta and b chains.

It is found in the cell inner membrane. The enzyme catalyses ATP + H2O + 4 H(+)(in) = ADP + phosphate + 5 H(+)(out). In terms of biological role, produces ATP from ADP in the presence of a proton gradient across the membrane. The alpha chain is a regulatory subunit. This is ATP synthase subunit alpha from Thermosipho melanesiensis (strain DSM 12029 / CIP 104789 / BI429).